The following is a 384-amino-acid chain: Zinc metalloproteinase nas-12 (384 aa).

A signal peptide spans 1 to 25 (MLYIPQFSIYFCLGYLLLFCKISNA). A Peptidase M12A domain is found at 73–271 (VSIKGSSMNR…EKLNRLGQCG (199 aa)). 5 disulfides stabilise this stretch: C116–C270, C137–C156, C287–C325, C296–C318, and C305–C322. Residue H164 participates in Zn(2+) binding. E165 is a catalytic residue. Residues H168 and H174 each contribute to the Zn(2+) site. Positions 287-325 (CQDVATAVSCEGNRRRGMCKNPFYKQMMIKSCQKTCRLC) constitute a ShKT 1 domain. The N-linked (GlcNAc...) asparagine glycan is linked to N340. Disulfide bonds link C348–C384, C355–C377, and C364–C381. The ShKT 2 domain occupies 348–384 (CEDKHPRCDIYSHNGFCTLPFYDDVRYQLCAKTCNLC).

Requires Zn(2+) as cofactor. As to expression, expressed in pharyngeal glands.

It localises to the secreted. Its function is as follows. Metalloprotease. The protein is Zinc metalloproteinase nas-12 (nas-12) of Caenorhabditis elegans.